The following is a 335-amino-acid chain: D-arabinose 1-dehydrogenase (335 aa).

Tyr-58 acts as the Proton donor in catalysis. His-124 serves as a coordination point for substrate. 221 to 287 (SLLRSQETRQ…VSSMEELKLA (67 aa)) contacts NAD(+).

The protein belongs to the aldo/keto reductase family. Aldo/keto reductase 2 subfamily.

It catalyses the reaction D-arabinose + NAD(+) = D-arabinono-1,4-lactone + NADH + H(+). This is D-arabinose 1-dehydrogenase (ARA2) from Saccharomyces cerevisiae (strain ATCC 204508 / S288c) (Baker's yeast).